The primary structure comprises 710 residues: Proline-rich receptor-like protein kinase PERK13 (710 aa).

The tract at residues methionine 1–glycine 229 is disordered. Residues methionine 1–threonine 235 lie on the Extracellular side of the membrane. Composition is skewed to pro residues over residues serine 7–aspartate 21, alanine 29–proline 130, proline 137–serine 151, and alanine 168–proline 188. Asparagine 191 carries an N-linked (GlcNAc...) asparagine glycan. The span at serine 209–serine 220 shows a compositional bias: low complexity. Residues methionine 236–valine 256 traverse the membrane as a helical segment. At arginine 257 to tyrosine 710 the chain is on the cytoplasmic side. Residues glutamine 289–methionine 334 form a disordered region. The span at tyrosine 301–serine 315 shows a compositional bias: low complexity. Threonine 342 carries the post-translational modification Phosphothreonine. The region spanning phenylalanine 353–methionine 619 is the Protein kinase domain. Residues leucine 359 to valine 367 and lysine 381 each bind ATP. Position 426 is a phosphotyrosine (tyrosine 426). Aspartate 477 acts as the Proton acceptor in catalysis. The residue at position 510 (serine 510) is a Phosphoserine. Residues threonine 511 and threonine 516 each carry the phosphothreonine modification. Residue tyrosine 524 is modified to Phosphotyrosine. The interval serine 676 to tyrosine 710 is disordered.

Belongs to the protein kinase superfamily. Ser/Thr protein kinase family. Interacts with KIPK1 and KIPK2 (via its cytosolic domain). As to expression, mostly expressed in roots, especially in root hairs.

The protein resides in the cell membrane. It catalyses the reaction L-seryl-[protein] + ATP = O-phospho-L-seryl-[protein] + ADP + H(+). The enzyme catalyses L-threonyl-[protein] + ATP = O-phospho-L-threonyl-[protein] + ADP + H(+). In terms of biological role, negatively regulates root hair elongation. This is Proline-rich receptor-like protein kinase PERK13 (PERK13) from Arabidopsis thaliana (Mouse-ear cress).